The following is a 47-amino-acid chain: Defensin-like protein 2 (47 aa).

Disulfide bonds link Cys-5–Cys-47, Cys-16–Cys-36, Cys-22–Cys-43, and Cys-26–Cys-45.

This sequence belongs to the DEFL family.

Fabatins have antibacterial activity against Gram-positive and Gram-negative bacteria. High activity against P.aeruginosa. No activity against S.cerevisiae and C.albicans. This is Defensin-like protein 2 from Vicia faba (Broad bean).